We begin with the raw amino-acid sequence, 311 residues long: Homoserine kinase (311 aa).

Residue 89 to 99 (PFARGLGSSAT) participates in ATP binding.

Belongs to the GHMP kinase family. Homoserine kinase subfamily.

Its subcellular location is the cytoplasm. It catalyses the reaction L-homoserine + ATP = O-phospho-L-homoserine + ADP + H(+). The protein operates within amino-acid biosynthesis; L-threonine biosynthesis; L-threonine from L-aspartate: step 4/5. In terms of biological role, catalyzes the ATP-dependent phosphorylation of L-homoserine to L-homoserine phosphate. The chain is Homoserine kinase from Halothermothrix orenii (strain H 168 / OCM 544 / DSM 9562).